The chain runs to 834 residues: Probable glucan 1,3-beta-glucosidase D (834 aa).

Residues 1 to 33 (MPSHSRSRDRYGGRDSDREARYDYDYARRRYAT) show a composition bias toward basic and acidic residues. 2 disordered regions span residues 1 to 188 (MPSH…ASHL) and 200 to 251 (QYEK…TKAR). The Cytoplasmic segment spans residues 1 to 306 (MPSHSRSRDR…GGRPFWKRKK (306 aa)). Residues 34 to 45 (DDNDDDYDDDEL) show a composition bias toward acidic residues. 4 stretches are compositionally biased toward basic and acidic residues: residues 46-76 (EHGL…RDAE), 98-173 (YGHD…ETAA), 201-218 (YEKE…AAKA), and 228-245 (VVGE…ESHR). A helical; Signal-anchor for type II membrane protein membrane pass occupies residues 307–327 (WIGLGALILILVIVIPVAVVV). The Extracellular segment spans residues 328-834 (SKKHDNKSDP…PDFGNLPEYY (507 aa)). The disordered stretch occupies residues 331–354 (HDNKSDPADPQGTSPGKSNLDGLS). N-linked (GlcNAc...) asparagine glycosylation is found at Asn333, Asn379, Asn384, Asn396, Asn549, Asn561, and Asn570. Glu600 acts as the Proton donor in catalysis. Asn639, Asn672, and Asn692 each carry an N-linked (GlcNAc...) asparagine glycan. The Nucleophile role is filled by Glu705.

Belongs to the glycosyl hydrolase 5 (cellulase A) family.

It is found in the cell membrane. The catalysed reaction is Successive hydrolysis of beta-D-glucose units from the non-reducing ends of (1-&gt;3)-beta-D-glucans, releasing alpha-glucose.. Functionally, glucosidase involved in the degradation of cellulosic biomass. Active on lichenan. The sequence is that of Probable glucan 1,3-beta-glucosidase D (exgD) from Neosartorya fischeri (strain ATCC 1020 / DSM 3700 / CBS 544.65 / FGSC A1164 / JCM 1740 / NRRL 181 / WB 181) (Aspergillus fischerianus).